The sequence spans 406 residues: Tryptophan synthase beta chain (406 aa).

Lysine 99 carries the N6-(pyridoxal phosphate)lysine modification.

This sequence belongs to the TrpB family. As to quaternary structure, tetramer of two alpha and two beta chains. Pyridoxal 5'-phosphate is required as a cofactor.

The enzyme catalyses (1S,2R)-1-C-(indol-3-yl)glycerol 3-phosphate + L-serine = D-glyceraldehyde 3-phosphate + L-tryptophan + H2O. It functions in the pathway amino-acid biosynthesis; L-tryptophan biosynthesis; L-tryptophan from chorismate: step 5/5. In terms of biological role, the beta subunit is responsible for the synthesis of L-tryptophan from indole and L-serine. This is Tryptophan synthase beta chain from Methylobacterium nodulans (strain LMG 21967 / CNCM I-2342 / ORS 2060).